The sequence spans 734 residues: Ribosome-releasing factor 2, mitochondrial (734 aa).

The transit peptide at 1–25 (MLQYCLLRRYRFLLRQHAQVIKRCY) directs the protein to the mitochondrion. In terms of domain architecture, tr-type G spans 27–303 (GDIRNIGILA…AVNAYLPMPE (277 aa)). GTP contacts are provided by residues 36 to 43 (AHIDAGKT), 100 to 104 (DTPGH), and 154 to 157 (NKMD).

The protein belongs to the TRAFAC class translation factor GTPase superfamily. Classic translation factor GTPase family. EF-G/EF-2 subfamily.

It is found in the mitochondrion. Mitochondrial GTPase that mediates the disassembly of ribosomes from messenger RNA at the termination of mitochondrial protein biosynthesis. Not involved in the GTP-dependent ribosomal translocation step during translation elongation. In Drosophila grimshawi (Hawaiian fruit fly), this protein is Ribosome-releasing factor 2, mitochondrial.